We begin with the raw amino-acid sequence, 284 residues long: Bifunctional protein FolD (284 aa).

NADP(+)-binding positions include 165–167 (GRS), serine 190, and isoleucine 231.

It belongs to the tetrahydrofolate dehydrogenase/cyclohydrolase family. In terms of assembly, homodimer.

It carries out the reaction (6R)-5,10-methylene-5,6,7,8-tetrahydrofolate + NADP(+) = (6R)-5,10-methenyltetrahydrofolate + NADPH. The enzyme catalyses (6R)-5,10-methenyltetrahydrofolate + H2O = (6R)-10-formyltetrahydrofolate + H(+). It participates in one-carbon metabolism; tetrahydrofolate interconversion. In terms of biological role, catalyzes the oxidation of 5,10-methylenetetrahydrofolate to 5,10-methenyltetrahydrofolate and then the hydrolysis of 5,10-methenyltetrahydrofolate to 10-formyltetrahydrofolate. The protein is Bifunctional protein FolD of Streptococcus thermophilus (strain ATCC BAA-491 / LMD-9).